The primary structure comprises 113 residues: Hydrogenase maturation factor HypA (113 aa).

His-2 contributes to the Ni(2+) binding site. The Zn(2+) site is built by Cys-73, Cys-76, Cys-89, and Cys-92.

This sequence belongs to the HypA/HybF family.

Functionally, involved in the maturation of [NiFe] hydrogenases. Required for nickel insertion into the metal center of the hydrogenase. This is Hydrogenase maturation factor HypA from Dechloromonas aromatica (strain RCB).